A 392-amino-acid polypeptide reads, in one-letter code: Probable tRNA sulfurtransferase (392 aa).

Positions Q60–K162 constitute a THUMP domain. ATP contacts are provided by residues L180 to L181, T205 to F206, R264, G286, and Q295.

This sequence belongs to the ThiI family.

It localises to the cytoplasm. The enzyme catalyses [ThiI sulfur-carrier protein]-S-sulfanyl-L-cysteine + a uridine in tRNA + 2 reduced [2Fe-2S]-[ferredoxin] + ATP + H(+) = [ThiI sulfur-carrier protein]-L-cysteine + a 4-thiouridine in tRNA + 2 oxidized [2Fe-2S]-[ferredoxin] + AMP + diphosphate. The catalysed reaction is [ThiS sulfur-carrier protein]-C-terminal Gly-Gly-AMP + S-sulfanyl-L-cysteinyl-[cysteine desulfurase] + AH2 = [ThiS sulfur-carrier protein]-C-terminal-Gly-aminoethanethioate + L-cysteinyl-[cysteine desulfurase] + A + AMP + 2 H(+). It functions in the pathway cofactor biosynthesis; thiamine diphosphate biosynthesis. In terms of biological role, catalyzes the ATP-dependent transfer of a sulfur to tRNA to produce 4-thiouridine in position 8 of tRNAs, which functions as a near-UV photosensor. Also catalyzes the transfer of sulfur to the sulfur carrier protein ThiS, forming ThiS-thiocarboxylate. This is a step in the synthesis of thiazole, in the thiamine biosynthesis pathway. The sulfur is donated as persulfide by IscS. The polypeptide is Probable tRNA sulfurtransferase (Ureaplasma urealyticum serovar 10 (strain ATCC 33699 / Western)).